The following is a 610-amino-acid chain: Chaperone protein DnaK (610 aa).

A Phosphothreonine; by autocatalysis modification is found at Thr173. 2 disordered regions span residues Glu525–Thr544 and Ala576–Lys610. Over residues Glu529–Leu542 the composition is skewed to basic and acidic residues. Over residues Ala576–Asn592 the composition is skewed to low complexity. Over residues Ala599–Lys610 the composition is skewed to basic and acidic residues.

The protein belongs to the heat shock protein 70 family.

In terms of biological role, acts as a chaperone. The chain is Chaperone protein DnaK from Staphylococcus aureus (strain Mu3 / ATCC 700698).